The sequence spans 195 residues: Inosine triphosphate pyrophosphatase (195 aa).

Residue 13 to 18 (TGNAKK) coordinates ITP. E43 is a binding site for Mg(2+). ITP is bound by residues K55, 71-72 (DT), K88, 148-151 (FGWD), K171, and 176-177 (HR).

This sequence belongs to the HAM1 NTPase family. Homodimer. Requires Mg(2+) as cofactor. It depends on Mn(2+) as a cofactor.

The protein resides in the cytoplasm. It carries out the reaction ITP + H2O = IMP + diphosphate + H(+). The enzyme catalyses dITP + H2O = dIMP + diphosphate + H(+). The catalysed reaction is XTP + H2O = XMP + diphosphate + H(+). It catalyses the reaction N(6)-hydroxy-dATP + H2O = N(6)-hydroxy-dAMP + diphosphate + H(+). In terms of biological role, pyrophosphatase that hydrolyzes the non-canonical purine nucleotides inosine triphosphate (ITP), deoxyinosine triphosphate (dITP) as well as 2'-deoxy-N-6-hydroxylaminopurine triphosphate (dHAPTP) and xanthosine 5'-triphosphate (XTP) to their respective monophosphate derivatives. The enzyme does not distinguish between the deoxy- and ribose forms. Probably excludes non-canonical purines from RNA and DNA precursor pools, thus preventing their incorporation into RNA and DNA and avoiding chromosomal lesions. In Xenopus laevis (African clawed frog), this protein is Inosine triphosphate pyrophosphatase (itpa).